A 565-amino-acid polypeptide reads, in one-letter code: Proline--tRNA ligase (565 aa).

The protein belongs to the class-II aminoacyl-tRNA synthetase family. ProS type 1 subfamily. Homodimer.

The protein resides in the cytoplasm. It catalyses the reaction tRNA(Pro) + L-proline + ATP = L-prolyl-tRNA(Pro) + AMP + diphosphate. Functionally, catalyzes the attachment of proline to tRNA(Pro) in a two-step reaction: proline is first activated by ATP to form Pro-AMP and then transferred to the acceptor end of tRNA(Pro). As ProRS can inadvertently accommodate and process non-cognate amino acids such as alanine and cysteine, to avoid such errors it has two additional distinct editing activities against alanine. One activity is designated as 'pretransfer' editing and involves the tRNA(Pro)-independent hydrolysis of activated Ala-AMP. The other activity is designated 'posttransfer' editing and involves deacylation of mischarged Ala-tRNA(Pro). The misacylated Cys-tRNA(Pro) is not edited by ProRS. The protein is Proline--tRNA ligase of Francisella tularensis subsp. novicida (strain U112).